The sequence spans 245 residues: tRNA pseudouridine synthase A (245 aa).

Asp52 acts as the Nucleophile in catalysis. Tyr111 is a binding site for substrate.

It belongs to the tRNA pseudouridine synthase TruA family. Homodimer.

The catalysed reaction is uridine(38/39/40) in tRNA = pseudouridine(38/39/40) in tRNA. Formation of pseudouridine at positions 38, 39 and 40 in the anticodon stem and loop of transfer RNAs. The chain is tRNA pseudouridine synthase A from Rickettsia bellii (strain RML369-C).